Reading from the N-terminus, the 126-residue chain is DNA-directed RNA polymerase I subunit RPA12 (126 aa).

Zn(2+) contacts are provided by Cys20, Cys23, Cys38, Cys41, Cys87, and Cys90. A C4-type zinc finger spans residues 20–41; it reads CSDCGSVLPLPGAQDTVTCTRC. The TFIIS-type zinc finger occupies 83-123; it reads VDRRCPRCGHEGMAYHTRQMRSADEGQTVFYTCTNCKFQEK. Residues 106-107 carry the Hairpin motif; sequence DE. Zn(2+) is bound by residues Cys115 and Cys118.

Belongs to the archaeal RpoM/eukaryotic RPA12/RPB9/RPC11 RNA polymerase family. Component of the RNA polymerase I (Pol I) complex consisting of 13 subunits: a ten-subunit catalytic core composed of POLR1A/RPA1, POLR1B/RPA2, POLR1C/RPAC1, POLR1D/RPAC2, POLR1H/RPA12, POLR2E/RPABC1, POLR2F/RPABC2, POLR2H/RPABC3, POLR2K/RPABC4 and POLR2L/RPABC5; a mobile stalk subunit POLR1F/RPA43 protruding from the core and additional subunits homologous to general transcription factors POLR1E/RPA49 and POLR1G/RPA34. Part of Pol I pre-initiation complex (PIC), in which Pol I core assembles with RRN3 and promoter-bound UTBF and SL1/TIF-IB complex.

The protein resides in the nucleus. It localises to the nucleolus. Functionally, core component of RNA polymerase I (Pol I), a DNA-dependent RNA polymerase which synthesizes ribosomal RNA precursors using the four ribonucleoside triphosphates as substrates. Can mediate Pol I proofreading of the nascent RNA transcript. Anchors into the Pol I active site to monitor transcription fidelity and cleave mis-incorporated 5'-ribonucleotides. In Macaca mulatta (Rhesus macaque), this protein is DNA-directed RNA polymerase I subunit RPA12.